We begin with the raw amino-acid sequence, 234 residues long: Segregation and condensation protein A (234 aa).

It belongs to the ScpA family. Component of a cohesin-like complex composed of ScpA, ScpB and the Smc homodimer, in which ScpA and ScpB bind to the head domain of Smc. The presence of the three proteins is required for the association of the complex with DNA.

Its subcellular location is the cytoplasm. Functionally, participates in chromosomal partition during cell division. May act via the formation of a condensin-like complex containing Smc and ScpB that pull DNA away from mid-cell into both cell halves. The chain is Segregation and condensation protein A from Streptococcus pyogenes serotype M3 (strain ATCC BAA-595 / MGAS315).